The sequence spans 94 residues: C-C motif chemokine 26 (94 aa).

The first 23 residues, Met-1–Thr-23, serve as a signal peptide directing secretion. Intrachain disulfides connect Cys-33/Cys-57 and Cys-34/Cys-73.

The protein belongs to the intercrine beta (chemokine CC) family. As to quaternary structure, monomer.

It is found in the secreted. In terms of biological role, chemoattractant for eosinophils and basophils. Acts as a ligand for C-C chemokine receptor CCR3 which triggers Ca(2+) mobilization in eosinophils. Also acts as a ligand for CX3C chemokine receptor CX3CR1, inducing cell chemotaxis. This is C-C motif chemokine 26 from Canis lupus familiaris (Dog).